The primary structure comprises 33 residues: Cytochrome b6-f complex subunit 8 (33 aa).

Residues 2 to 22 (IFQIGWAALAAIFTFSIAMVV) form a helical membrane-spanning segment.

Belongs to the PetN family. The 4 large subunits of the cytochrome b6-f complex are cytochrome b6, subunit IV (17 kDa polypeptide, PetD), cytochrome f and the Rieske protein, while the 4 small subunits are PetG, PetL, PetM and PetN. The complex functions as a dimer.

It localises to the cellular thylakoid membrane. Its function is as follows. Component of the cytochrome b6-f complex, which mediates electron transfer between photosystem II (PSII) and photosystem I (PSI), cyclic electron flow around PSI, and state transitions. This Prochlorococcus marinus (strain MIT 9301) protein is Cytochrome b6-f complex subunit 8.